We begin with the raw amino-acid sequence, 261 residues long: MTKEEGRTYFESLCEEEQSLQESQTHLLNILDILSVLADPRSSDDLLTESLKKLPDLHRELINSSIRLRYDKYQTREAQLLEDTKTGRDVAAGVQNPKSISEYYSTFEHLNRDTLRYINLLKRLSVDLAKQVEVSDPSVTVYEMDKWVPSEKLQGILEQYCAPDTDIRGVDAQIKNYLDQIKMARAKFGLENKYSLKERLSTLTKELNHWRKEWDDIEMLMFGDDAHSMKKMIQKIDSLKSEINAPSESYPVDKEGDIVLE.

Component of the THO complex, which is composed of HPR1, MFT1, THO2 and THP2. Together with SUB2, TEX1 and YRA1, THO forms the transcription/export (TREX) complex. THO associates with DNA and RNA in vitro.

It is found in the nucleus. Its function is as follows. Component the THO subcomplex of the TREX complex, which operates in coupling transcription elongation to mRNA export. The THO complex is recruited to transcribed genes and moves along the gene with the elongating polymerase during transcription. THO is important for stabilizing nascent RNA in the RNA polymerase II elongation complex by preventing formation of DNA:RNA hybrids behind the elongating polymerase. It functions in cotranscriptional formation of an export-competent messenger ribonucleoprotein particle (mRNP) by facilitating the loading of ATP-dependent RNA helicase SUB2 and the mRNA export factor YRA1 along the nascent mRNA. The protein is THO complex subunit THP2 (THP2) of Saccharomyces cerevisiae (strain ATCC 204508 / S288c) (Baker's yeast).